The primary structure comprises 192 residues: Fe/S biogenesis protein NfuA (192 aa).

Positions 149 and 152 each coordinate [4Fe-4S] cluster.

This sequence belongs to the NfuA family. As to quaternary structure, homodimer. Requires [4Fe-4S] cluster as cofactor.

In terms of biological role, involved in iron-sulfur cluster biogenesis. Binds a 4Fe-4S cluster, can transfer this cluster to apoproteins, and thereby intervenes in the maturation of Fe/S proteins. Could also act as a scaffold/chaperone for damaged Fe/S proteins. This Shewanella baltica (strain OS223) protein is Fe/S biogenesis protein NfuA.